The chain runs to 108 residues: UPF0060 membrane protein SA2130 (108 aa).

Helical transmembrane passes span 5-25, 31-51, 60-80, and 86-106; these read IFIFILAGLCEIGGGYLIWLW, SSLVGLIGGAILMLYGVIATF, VYAAYGGVFIIMSLIFAMVVD, and KYDVIGAIICIVGVLVMLLPS.

Belongs to the UPF0060 family.

It is found in the cell membrane. This chain is UPF0060 membrane protein SA2130, found in Staphylococcus aureus (strain N315).